A 95-amino-acid chain; its full sequence is Aspartyl/glutamyl-tRNA(Asn/Gln) amidotransferase subunit C (95 aa).

Belongs to the GatC family. In terms of assembly, heterotrimer of A, B and C subunits.

It catalyses the reaction L-glutamyl-tRNA(Gln) + L-glutamine + ATP + H2O = L-glutaminyl-tRNA(Gln) + L-glutamate + ADP + phosphate + H(+). It carries out the reaction L-aspartyl-tRNA(Asn) + L-glutamine + ATP + H2O = L-asparaginyl-tRNA(Asn) + L-glutamate + ADP + phosphate + 2 H(+). Its function is as follows. Allows the formation of correctly charged Asn-tRNA(Asn) or Gln-tRNA(Gln) through the transamidation of misacylated Asp-tRNA(Asn) or Glu-tRNA(Gln) in organisms which lack either or both of asparaginyl-tRNA or glutaminyl-tRNA synthetases. The reaction takes place in the presence of glutamine and ATP through an activated phospho-Asp-tRNA(Asn) or phospho-Glu-tRNA(Gln). The sequence is that of Aspartyl/glutamyl-tRNA(Asn/Gln) amidotransferase subunit C from Allorhizobium ampelinum (strain ATCC BAA-846 / DSM 112012 / S4) (Agrobacterium vitis (strain S4)).